The chain runs to 365 residues: S-adenosylmethionine:tRNA ribosyltransferase-isomerase (365 aa).

Belongs to the QueA family. As to quaternary structure, monomer.

It localises to the cytoplasm. It catalyses the reaction 7-aminomethyl-7-carbaguanosine(34) in tRNA + S-adenosyl-L-methionine = epoxyqueuosine(34) in tRNA + adenine + L-methionine + 2 H(+). It functions in the pathway tRNA modification; tRNA-queuosine biosynthesis. Its function is as follows. Transfers and isomerizes the ribose moiety from AdoMet to the 7-aminomethyl group of 7-deazaguanine (preQ1-tRNA) to give epoxyqueuosine (oQ-tRNA). The protein is S-adenosylmethionine:tRNA ribosyltransferase-isomerase of Rickettsia rickettsii (strain Iowa).